Consider the following 285-residue polypeptide: Integrin alpha-1 (285 aa).

The Extracellular segment spans residues 1-285; sequence ENMTFGTTLV…HYSQDWVMLG (285 aa). N-linked (GlcNAc...) asparagine glycans are attached at residues asparagine 2, asparagine 40, asparagine 208, and asparagine 232. The region spanning 66–279 is the VWFA domain; that stretch reads IVLDGSNSIY…QAGFSAHYSQ (214 aa).

This sequence belongs to the integrin alpha chain family. As to quaternary structure, heterodimer of an alpha and a beta subunit. Alpha-1 associates with beta-1.

The protein localises to the membrane. Integrin alpha-1/beta-1 is a receptor for laminin and collagen. It recognizes the proline-hydroxylated sequence G-F-P-G-E-R in collagen. Involved in anchorage-dependent, negative regulation of EGF-stimulated cell growth. The chain is Integrin alpha-1 (ITGA1) from Gallus gallus (Chicken).